Here is a 308-residue protein sequence, read N- to C-terminus: uncharacterized protein (308 aa).

5 helical membrane passes run 46–66 (GISA…GVLQ), 82–102 (LLAA…LLWM), 159–179 (AAIG…FLIF), 190–210 (FFQV…IGVL), and 271–291 (LYLF…SLYF).

The protein belongs to the oxidase-dependent Fe transporter (OFeT) (TC 9.A.10.1) family.

It is found in the cell membrane. This is an uncharacterized protein from Synechocystis sp. (strain ATCC 27184 / PCC 6803 / Kazusa).